The following is an 845-amino-acid chain: Translation initiation factor IF-2 (845 aa).

Basic and acidic residues-rich tracts occupy residues 139-198 (EAKR…EKPA) and 206-228 (FRSE…KELH). The tract at residues 139-253 (EAKRQAAEEE…PQKAAPAAKH (115 aa)) is disordered. Residues 345-512 (SRAAVVTIMG…AILLQAEVME (168 aa)) form the tr-type G domain. The segment at 354–361 (GHVDHGKT) is G1. 354-361 (GHVDHGKT) contacts GTP. The segment at 379–383 (GITQH) is G2. Positions 400-403 (DTPG) are G3. Residues 400–404 (DTPGH) and 454–457 (NKID) contribute to the GTP site. Residues 454 to 457 (NKID) are G4. The interval 490 to 492 (SAK) is G5.

Belongs to the TRAFAC class translation factor GTPase superfamily. Classic translation factor GTPase family. IF-2 subfamily.

Its subcellular location is the cytoplasm. Functionally, one of the essential components for the initiation of protein synthesis. Protects formylmethionyl-tRNA from spontaneous hydrolysis and promotes its binding to the 30S ribosomal subunits. Also involved in the hydrolysis of GTP during the formation of the 70S ribosomal complex. In Nitrosococcus oceani (strain ATCC 19707 / BCRC 17464 / JCM 30415 / NCIMB 11848 / C-107), this protein is Translation initiation factor IF-2.